Here is a 128-residue protein sequence, read N- to C-terminus: Protein BEX2 (128 aa).

Omega-N-methylarginine is present on arginine 50. The interval 107 to 128 (SLRAVSTDPPHHDHHDEFCLMP) is disordered. The segment covering 115 to 128 (PPHHDHHDEFCLMP) has biased composition (basic and acidic residues). Residues 117–121 (HHDHH) form a his cluster region. Cysteine 125 lines the Zn(2+) pocket.

This sequence belongs to the BEX family. Interacts with LMO2, possibly leading to regulate the transcriptional activity of a DNA-binding complex containing LMO2. Interacts with OMP. As to expression, expressed in central nervous system, with high level in pituitary, cerebellum and temporal lobe. Widely expressed in breast cancer cell lines.

It localises to the cytoplasm. It is found in the nucleus. Regulator of mitochondrial apoptosis and G1 cell cycle in breast cancer. Protects the breast cancer cells against mitochondrial apoptosis and this effect is mediated through the modulation of BCL2 protein family, which involves the positive regulation of anti-apoptotic member BCL2 and the negative regulation of pro-apoptotic members BAD, BAK1 and PUMA. Required for the normal cell cycle progression during G1 in breast cancer cells through the regulation of CCND1 and CDKN1A. Regulates the level of PP2A regulatory subunit B and PP2A phosphatase activity. In absence of reductive stress, acts as a pseudosubstrate for the CRL2(FEM1B) complex: associates with FEM1B via zinc, thereby preventing association between FEM1B and its substrates. In Homo sapiens (Human), this protein is Protein BEX2 (BEX2).